The sequence spans 395 residues: 3-sulfinopropanoyl-CoA desulfinase (395 aa).

Residues 121–124 (ICIS), serine 130, and 153–156 (YWIT) contribute to the FAD site. Substrate is bound at residue 243-244 (YN). FAD contacts are provided by residues arginine 272, glutamine 339, serine 343, 366–370 (GGTAQ), and glutamine 387.

Belongs to the acyl-CoA dehydrogenase family. As to quaternary structure, homotrimer or homotetramer. FAD is required as a cofactor.

It carries out the reaction 3-sulfinopropanoyl-CoA + H2O = propanoyl-CoA + sulfite + H(+). In terms of biological role, catalyzes the conversion 3-sulfinopropanoyl-CoA (3SP-CoA) to propanoyl-CoA by abstraction of sulfite. Does not show dehydrogenase activity. This is 3-sulfinopropanoyl-CoA desulfinase from Cupriavidus necator (strain ATCC 43291 / DSM 13513 / CCUG 52238 / LMG 8453 / N-1) (Ralstonia eutropha).